We begin with the raw amino-acid sequence, 228 residues long: Endonuclease V (228 aa).

Mg(2+) contacts are provided by Asp36 and Asp104.

This sequence belongs to the endonuclease V family. Mg(2+) serves as cofactor.

Its subcellular location is the cytoplasm. It carries out the reaction Endonucleolytic cleavage at apurinic or apyrimidinic sites to products with a 5'-phosphate.. Its function is as follows. DNA repair enzyme involved in the repair of deaminated bases. Selectively cleaves double-stranded DNA at the second phosphodiester bond 3' to a deoxyinosine leaving behind the intact lesion on the nicked DNA. This Serratia proteamaculans (strain 568) protein is Endonuclease V.